The sequence spans 582 residues: Protein bps2 (582 aa).

28–35 contacts ATP; that stretch reads APNAYGKT. The stretch at 243–281 forms a coiled coil; the sequence is RQSYERQLQEINAQLQKITAQRNEAEIEIRLLEKVLDQI. Residues 243-351 form the Zinc-hook domain; the sequence is RQSYERQLQE…KLKELDQISS (109 aa). 2 residues coordinate Zn(2+): C292 and C295. A coiled-coil region spans residues 320 to 351; it reads SLYAGIKKEADELLSKKSEIEKKLKELDQISS.

The polypeptide is Protein bps2 (bps2) (Acidianus ambivalens (Desulfurolobus ambivalens)).